Consider the following 60-residue polypeptide: Large ribosomal subunit protein bL32 (60 aa).

The interval 1 to 60 (MAVQQNKKSPSKRGMHRSHDFLVNPATAIEPNTGETHLRHHISPNGFYRGRKVLKTKADE) is disordered. Over residues 49–60 (RGRKVLKTKADE) the composition is skewed to basic residues.

This sequence belongs to the bacterial ribosomal protein bL32 family.

The chain is Large ribosomal subunit protein bL32 from Bordetella bronchiseptica (strain ATCC BAA-588 / NCTC 13252 / RB50) (Alcaligenes bronchisepticus).